The sequence spans 1014 residues: Valine--tRNA ligase (1014 aa).

The 'HIGH' region motif lies at 49–59 (PNVTGSLHMGH). Residues 542-546 (KMSKS) carry the 'KMSKS' region motif. Lys545 is a binding site for ATP. The stretch at 947–1014 (VVDIETLRAK…ILRLRLQTLV (68 aa)) forms a coiled coil.

It belongs to the class-I aminoacyl-tRNA synthetase family. ValS type 1 subfamily. Monomer.

The protein resides in the cytoplasm. It carries out the reaction tRNA(Val) + L-valine + ATP = L-valyl-tRNA(Val) + AMP + diphosphate. In terms of biological role, catalyzes the attachment of valine to tRNA(Val). As ValRS can inadvertently accommodate and process structurally similar amino acids such as threonine, to avoid such errors, it has a 'posttransfer' editing activity that hydrolyzes mischarged Thr-tRNA(Val) in a tRNA-dependent manner. In Nostoc sp. (strain PCC 7120 / SAG 25.82 / UTEX 2576), this protein is Valine--tRNA ligase.